The primary structure comprises 236 residues: Rab-like protein 3 (236 aa).

The segment at Met1–Cys235 is small GTPase-like. Residues Gly16–Ser21, Lys148–Asp150, and Asp179–Cys180 each bind GTP.

The protein belongs to the small GTPase superfamily. Rab family. Homodimer. Interacts with GPR89; the interaction stabilizes GPR89. Interacts with RAP1GDS1.

Required for KRAS signaling regulation and modulation of cell proliferation. Regulator of KRAS prenylation, and probably prenylation of other small GTPases. Required for lymphocyte development and function. Not required for myeloid cell development. This chain is Rab-like protein 3 (Rabl3), found in Mus musculus (Mouse).